A 447-amino-acid chain; its full sequence is Asparagine--tRNA ligase (447 aa).

It belongs to the class-II aminoacyl-tRNA synthetase family. As to quaternary structure, homodimer.

It localises to the cytoplasm. The catalysed reaction is tRNA(Asn) + L-asparagine + ATP = L-asparaginyl-tRNA(Asn) + AMP + diphosphate + H(+). The protein is Asparagine--tRNA ligase of Herpetosiphon aurantiacus (strain ATCC 23779 / DSM 785 / 114-95).